A 272-amino-acid chain; its full sequence is Alkaline ceramidase (272 aa).

A run of 2 helical transmembrane segments spans residues 34–54 (FANTCTNLPIIVLPLVNIMLL) and 61–81 (VNGGLVFPQLLLTFNGLASTY). Residue His-83 coordinates Zn(2+). The next 4 helical transmembrane spans lie at 96-116 (LSLVWIITVFLVVYIPVMKWF), 124-144 (LTVVRWVVLIVTAVVSALCFL), 148-168 (LNAIALMLFSIPAAVVIRYEG), and 183-203 (ILALWGVAFSFWFADRLLCDF). 2 residues coordinate Zn(2+): His-213 and His-217. A helical transmembrane segment spans residues 214–234 (ALFHLLAGLAGYTIFIMFSMI). N-linked (GlcNAc...) asparagine glycosylation is present at Asn-256.

It belongs to the alkaline ceramidase family. Requires Zn(2+) as cofactor.

It localises to the membrane. The catalysed reaction is an N-acylsphing-4-enine + H2O = sphing-4-enine + a fatty acid. Functionally, hydrolyzes the sphingolipid ceramide into sphingosine and free fatty acid. The polypeptide is Alkaline ceramidase (Caenorhabditis briggsae).